A 107-amino-acid chain; its full sequence is Large ribosomal subunit protein uL24 (107 aa).

Belongs to the universal ribosomal protein uL24 family. As to quaternary structure, part of the 50S ribosomal subunit.

Functionally, one of two assembly initiator proteins, it binds directly to the 5'-end of the 23S rRNA, where it nucleates assembly of the 50S subunit. Its function is as follows. One of the proteins that surrounds the polypeptide exit tunnel on the outside of the subunit. This is Large ribosomal subunit protein uL24 from Thermotoga neapolitana (strain ATCC 49049 / DSM 4359 / NBRC 107923 / NS-E).